A 503-amino-acid chain; its full sequence is Aromatase (503 aa).

Transmembrane regions (helical) follow at residues 19 to 39, 53 to 73, and 303 to 323; these read EVVPIASIAILLLTGFLLLVW, FLGIGPLISHCRFLWMGIGSA, and MLIAAPDTMSVSVFFMLFLIA. 2 residues coordinate substrate: Asp309 and Met374. Cys437 is a binding site for heme.

The protein belongs to the cytochrome P450 family. Heme is required as a cofactor.

Its subcellular location is the endoplasmic reticulum membrane. The protein localises to the microsome membrane. It catalyses the reaction testosterone + 3 reduced [NADPH--hemoprotein reductase] + 3 O2 = 17beta-estradiol + formate + 3 oxidized [NADPH--hemoprotein reductase] + 4 H2O + 4 H(+). It carries out the reaction androst-4-ene-3,17-dione + 3 reduced [NADPH--hemoprotein reductase] + 3 O2 = estrone + formate + 3 oxidized [NADPH--hemoprotein reductase] + 4 H2O + 4 H(+). The enzyme catalyses androst-4-ene-3,17-dione + reduced [NADPH--hemoprotein reductase] + O2 = 19-hydroxyandrost-4-ene-3,17-dione + oxidized [NADPH--hemoprotein reductase] + H2O + H(+). The catalysed reaction is 19-hydroxyandrost-4-ene-3,17-dione + reduced [NADPH--hemoprotein reductase] + O2 = 19-oxo-androst-4-ene-3,17-dione + oxidized [NADPH--hemoprotein reductase] + 2 H2O + H(+). It catalyses the reaction 19-oxo-androst-4-ene-3,17-dione + reduced [NADPH--hemoprotein reductase] + O2 = estrone + formate + oxidized [NADPH--hemoprotein reductase] + H2O + 2 H(+). It carries out the reaction estrone + reduced [NADPH--hemoprotein reductase] + O2 = 2-hydroxyestrone + oxidized [NADPH--hemoprotein reductase] + H2O + H(+). The enzyme catalyses 17beta-hydroxy-5alpha-androstan-3-one + reduced [NADPH--hemoprotein reductase] + O2 = 17beta,19-dihydroxy-3-oxo-5alpha-androstanone + oxidized [NADPH--hemoprotein reductase] + H2O + H(+). The catalysed reaction is 17beta,19-dihydroxy-3-oxo-5alpha-androstanone + reduced [NADPH--hemoprotein reductase] + O2 = 17beta-hydroxy-3,19-dioxo-5alpha-androstanone + oxidized [NADPH--hemoprotein reductase] + 2 H2O + H(+). It catalyses the reaction 17beta-hydroxy-3,19-dioxo-5alpha-androstanone + reduced [NADPH--hemoprotein reductase] + O2 = 17beta-hydroxy-3-oxo-19-nor-5alpha-androst-1-ene + formate + oxidized [NADPH--hemoprotein reductase] + H2O + 2 H(+). It functions in the pathway steroid hormone biosynthesis. Its function is as follows. A cytochrome P450 monooxygenase that catalyzes the conversion of C19 androgens, androst-4-ene-3,17-dione (androstenedione) and testosterone to the C18 estrogens, estrone and estradiol, respectively. Catalyzes three successive oxidations of C19 androgens: two conventional oxidations at C19 yielding 19-hydroxy and 19-oxo/19-aldehyde derivatives, followed by a third oxidative aromatization step that involves C1-beta hydrogen abstraction combined with cleavage of the C10-C19 bond to yield a phenolic A ring and formic acid. Alternatively, the third oxidative reaction yields a 19-norsteroid and formic acid. Converts dihydrotestosterone to delta1,10-dehydro 19-nordihydrotestosterone and may play a role in homeostasis of this potent androgen. Also displays 2-hydroxylase activity toward estrone. Mechanistically, uses molecular oxygen inserting one oxygen atom into a substrate, and reducing the second into a water molecule, with two electrons provided by NADPH via cytochrome P450 reductase (CPR; NADPH-ferrihemoprotein reductase). This Capra hircus (Goat) protein is Aromatase (CYP19A1).